A 156-amino-acid chain; its full sequence is 3-hydroxyacyl-[acyl-carrier-protein] dehydratase FabZ (156 aa).

The active site involves H50.

The protein belongs to the thioester dehydratase family. FabZ subfamily.

It is found in the cytoplasm. The enzyme catalyses a (3R)-hydroxyacyl-[ACP] = a (2E)-enoyl-[ACP] + H2O. Its function is as follows. Involved in unsaturated fatty acids biosynthesis. Catalyzes the dehydration of short chain beta-hydroxyacyl-ACPs and long chain saturated and unsaturated beta-hydroxyacyl-ACPs. In Janthinobacterium sp. (strain Marseille) (Minibacterium massiliensis), this protein is 3-hydroxyacyl-[acyl-carrier-protein] dehydratase FabZ.